Consider the following 255-residue polypeptide: Putative expansin-A27 (255 aa).

An N-terminal signal peptide occupies residues 1-24; that stretch reads MGAMAENLLVLCTILAARMALAAA. The region spanning 45-160 is the Expansin-like EG45 domain; that stretch reads GGACGYGNLY…RRVRCWRRGG (116 aa). The region spanning 170–249 is the Expansin-like CBD domain; it reads HFELVLVANV…GWKFGQTFST (80 aa).

It belongs to the expansin family. Expansin A subfamily.

The protein resides in the secreted. The protein localises to the cell wall. Its subcellular location is the membrane. In terms of biological role, may cause loosening and extension of plant cell walls by disrupting non-covalent bonding between cellulose microfibrils and matrix glucans. No enzymatic activity has been found. May be required for rapid internodal elongation in deepwater rice during submergence. The protein is Putative expansin-A27 (EXPA27) of Oryza sativa subsp. japonica (Rice).